The primary structure comprises 231 residues: Eukaryotic translation initiation factor 4E-1 (231 aa).

2 EIF4G-binding regions span residues 56–59 and 66–102; these read HPLE and FDNP…NNIH. MRNA is bound by residues 74-79, K106, and 124-125; these read RQTAWG and WE. The cysteines at positions 129 and 167 are disulfide-linked. Residues 150–159 form an EIF4G-binding region; sequence YTLLAMIGHQ. MRNA-binding positions include 174–179 and 219–223; these read RAKGEK and KRLDR.

Belongs to the eukaryotic initiation factor 4E family. In terms of assembly, EIF4F is a multi-subunit complex, the composition of which varies with external and internal environmental conditions. It is composed of at least EIF4A, EIF4E and EIF4G. EIF4E is also known to interact with other partners. In higher plants two isoforms of EIF4F have been identified, named isoform EIF4F and isoform EIF(iso)4F. Isoform EIF4F has subunits p220 and p26, whereas isoform EIF(iso)4F has subunits p82 and p28. (Microbial infection) Interacts with potyvirus viral genome-linked protein (VPg); mostly with tobacco etch virus (TEV-HAT) VPg and, to a lower extent, with potato virus Y (PVY-LYE84 and PVY-LYE90) and pepper mottle virus (PepMoV) VPg. According to the redox status, the Cys-129-Cys-167 disulfide bridge may have a role in regulating protein function by affecting its ability to bind capped mRNA.

It localises to the nucleus. The protein localises to the cytoplasm. Its function is as follows. Component of the protein complex eIF4F, which is involved in the recognition of the mRNA cap, ATP-dependent unwinding of 5'-terminal secondary structure and recruitment of mRNA to the ribosome. Recognizes and binds the 7-methylguanosine-containing mRNA cap during an early step in the initiation of protein synthesis and facilitates ribosome binding by inducing the unwinding of the mRNAs secondary structures. Key component of recessive resistance to potyviruses. Functionally, (Microbial infection) Susceptibility host factor required for viral infection (e.g. potato virus Y (PVY), pepper mottle virus (PepMoV) and tobacco etch virus (TEV)) by recruiting viral RNAs to the host ribosomal complex via an interaction with viral genome-linked protein (VPg). This Solanum lycopersicum (Tomato) protein is Eukaryotic translation initiation factor 4E-1.